Here is a 116-residue protein sequence, read N- to C-terminus: Promotilin (116 aa).

An N-terminal signal peptide occupies residues 1–25 (MVSRKAVAVLLMVHVAVMLASQTEA). The disordered stretch occupies residues 39–74 (REKERNKGQKKSLIVQQRSEEVGPLDPVEPPEEEEN).

Belongs to the motilin family.

The protein resides in the secreted. Functionally, plays an important role in the regulation of interdigestive gastrointestinal motility and indirectly causes rhythmic contraction of duodenal and colonic smooth muscle. The sequence is that of Promotilin (MLN) from Felis catus (Cat).